Here is a 539-residue protein sequence, read N- to C-terminus: 2,3-dihydroxybenzoate-AMP ligase (539 aa).

ATP is bound at residue G191. Residues H234–N235 and S240 each bind substrate. ATP-binding residues include G307, V329, D413, R428, and K519. A substrate-binding site is contributed by K519.

The protein belongs to the ATP-dependent AMP-binding enzyme family.

It localises to the cytoplasm. It catalyses the reaction 2,3-dihydroxybenzoate + holo-[ACP] + ATP = 2,3-dihydroxybenzoyl-[ACP] + AMP + diphosphate. It participates in siderophore biosynthesis; bacillibactin biosynthesis. In terms of biological role, involved in the biosynthesis of the catecholic siderophore bacillibactin. Catalyzes the activation of the carboxylate group of 2,3-dihydroxy-benzoate (DHB), via ATP-dependent PPi exchange reactions, to the acyladenylate. This is 2,3-dihydroxybenzoate-AMP ligase from Bacillus subtilis (strain 168).